A 190-amino-acid polypeptide reads, in one-letter code: Cytidylate kinase (190 aa).

7–15 (GKIGSGKST) is an ATP binding site.

The protein belongs to the cytidylate kinase family. Type 2 subfamily.

Its subcellular location is the cytoplasm. It catalyses the reaction CMP + ATP = CDP + ADP. The enzyme catalyses dCMP + ATP = dCDP + ADP. This Thermoplasma volcanium (strain ATCC 51530 / DSM 4299 / JCM 9571 / NBRC 15438 / GSS1) protein is Cytidylate kinase.